A 389-amino-acid chain; its full sequence is MTSAAPAAAQFAAPAPAAMGIYDRRHHPLAAGVWGDHPFIRPDTTASTSNAAAAAMVVAPPPLTEPKFESQLALPLQHGDDQDNAAALQESPRHASDSFEQEASKPRDKIQRRLAQNREAARKSRLRKKAYIQNLETSRMKLAHLEQEITRARQQSAYINRSSNPATLPAPIDSGVVTFEVEYAQWVEEQGRQTAELRASLQAAAEGPELRAVVEAALAHYDRLFAAKREAARRDVFFVMSGVWRTGAERFFLWIAGFRPSEVIRVLAPQLEPMTERQAADVQGLQQKARHLEDALSQGMDKLKQTLADSLLAEAVVVSTSCDASPPPPPPEEEEPSSSAAGDGGCYMAQMGSAMGRLSNLVAFVDHVRHRRSPPPTSHLHVRRRAELG.

Positions 80–110 (DDQDNAAALQESPRHASDSFEQEASKPRDKI) are disordered. Over residues 91–110 (SPRHASDSFEQEASKPRDKI) the composition is skewed to basic and acidic residues. One can recognise a bZIP domain in the interval 107–151 (RDKIQRRLAQNREAARKSRLRKKAYIQNLETSRMKLAHLEQEITR). The segment at 109 to 129 (KIQRRLAQNREAARKSRLRKK) is basic motif. The tract at residues 135–149 (LETSRMKLAHLEQEI) is leucine-zipper. The region spanning 176–389 (VVTFEVEYAQ…LHVRRRAELG (214 aa)) is the DOG1 domain. Disordered stretches follow at residues 320–345 (TSCD…GDGG) and 370–389 (HRRS…AELG). Residues 380–389 (LHVRRRAELG) are compositionally biased toward basic residues.

Belongs to the bZIP family.

It is found in the nucleus. Its function is as follows. Transcriptional regulator involved in defense response. The protein is Transcription factor TGAL10 of Oryza sativa subsp. japonica (Rice).